Consider the following 510-residue polypeptide: uncharacterized protein (510 aa).

At 1–89 the chain is on the lumenal side; sequence MTSSLDDIEP…QGQRKKVLLK (89 aa). The tract at residues 38 to 76 is disordered; the sequence is AVSQGVPDMDGQTTDSSKDPEPNSEDKKAFPPSSGSFFS. Residues 53–66 show a composition bias toward basic and acidic residues; sequence SSKDPEPNSEDKKA. Residues 67–76 are compositionally biased toward low complexity; sequence FPPSSGSFFS. The chain crosses the membrane as a helical span at residues 90–110; sequence FVFTNCLLAIICFTMFVLFWG. Topologically, residues 111-123 are cytoplasmic; sequence ALYDTSKYLHKVK. The helical transmembrane segment at 124–144 threads the bilayer; it reads LLVVIQEPPVVILDNNSSMVV. At 145-312 the chain is on the lumenal side; sequence PSISYALPTF…TDRILLAPTQ (168 aa). Residues 313–333 traverse the membrane as a helical segment; it reads IGVVYCLLLTFFQFLLYGPLH. At 334–349 the chain is on the cytoplasmic side; the sequence is VEMAKVLRPANGLIYR. A helical transmembrane segment spans residues 350-370; that stretch reads IAMSWFTFFFASLFFCTTTAI. Topologically, residues 371 to 381 are lumenal; the sequence is FQVDFTKSFGR. The chain crosses the membrane as a helical span at residues 382 to 402; the sequence is GGFVVYWMSTWLFMLAAGGAN. Residues 403-416 lie on the Cytoplasmic side of the membrane; that stretch reads ENAVMLVITLGPQY. The helical transmembrane segment at 417–437 threads the bilayer; that stretch reads LGFWILSFVILNIAPSFFPLA. Residues 438-474 lie on the Lumenal side of the membrane; the sequence is LNNNVYRYGYMMPVHNVIDIYRVIFFDVTRRKMGRNY. A helical transmembrane segment spans residues 475–495; that stretch reads GILVALIALNTALLPFVGKYA. The Cytoplasmic portion of the chain corresponds to 496–510; the sequence is SRKLKQKALVAAKQS.

It to yeast SNG1.

It localises to the endoplasmic reticulum membrane. This is an uncharacterized protein from Saccharomyces cerevisiae (strain ATCC 204508 / S288c) (Baker's yeast).